The chain runs to 142 residues: MEPLLIQDVLKTLPHRFPFVLVDRVLSAQDGEVHALKNVTVNEPFFPGHFPQEPVMPGVLIVEALAQASMFCLHGQLEPGTVGYLAGVEGARFKRKVIPGDQLHLYAKLDFLRRGLGKTTCRAEVDGQVAAEATILFAVAKG.

His49 is a catalytic residue.

This sequence belongs to the thioester dehydratase family. FabZ subfamily.

It localises to the cytoplasm. The enzyme catalyses a (3R)-hydroxyacyl-[ACP] = a (2E)-enoyl-[ACP] + H2O. In terms of biological role, involved in unsaturated fatty acids biosynthesis. Catalyzes the dehydration of short chain beta-hydroxyacyl-ACPs and long chain saturated and unsaturated beta-hydroxyacyl-ACPs. This chain is 3-hydroxyacyl-[acyl-carrier-protein] dehydratase FabZ, found in Deinococcus geothermalis (strain DSM 11300 / CIP 105573 / AG-3a).